The following is a 296-amino-acid chain: Diguanylate cyclase DgcZ (296 aa).

His22, Cys52, His79, and His83 together coordinate Zn(2+). The GGDEF domain occupies 157–289 (LNLYLMLLDI…GRNRCMFIDE (133 aa)). The Mg(2+) site is built by Asp165 and Ile166. Substrate is bound by residues Asn173, His178, Asp182, and 195–200 (WTRDYE). Glu208 provides a ligand contact to Mg(2+). The active-site Proton acceptor is Glu208. Residues Lys215, Arg224, and Arg228 each contribute to the substrate site.

Homodimer. Requires Mg(2+) as cofactor.

It carries out the reaction 2 GTP = 3',3'-c-di-GMP + 2 diphosphate. The protein operates within purine metabolism; 3',5'-cyclic di-GMP biosynthesis. Allosterically regulated by zinc, which seems to regulate the activity of the catalytic GGDEF domains by impeding their mobility and thus preventing productive encounter of the two GTP substrates. Subject to product inhibition by c-di-GMP at a KI of 44 uM. In terms of biological role, catalyzes the synthesis of cyclic-di-GMP (c-di-GMP) via the condensation of 2 GTP molecules. May act as a zinc sensor that controls, via c-di-GMP, post-translational events. Overexpression leads to a strong repression of swimming; swimming returnes to normal when residues 206-207 are both mutated to Ala. Overexpression also leads to a reduction in flagellar abundance and a 20-fold increase in c-di-GMP levels in vivo. Required for aminoglycoside-mediated induction of biofilm formation, it also plays a lesser role in biofilm production in response to other classes of translation inhibitors. The c-di-GMP produced by this enzyme up-regulates poly-GlcNAc production as well as the biofilm synthesis protein PgaD, although c-di-GMP is probably not the main inducing principle. C-di-GMP is a second messenger which controls cell surface-associated traits in bacteria. This Escherichia coli (strain K12) protein is Diguanylate cyclase DgcZ.